The sequence spans 356 residues: Phosphatidylglycerol--prolipoprotein diacylglyceryl transferase (356 aa).

4 helical membrane passes run 24-44 (IKWY…LACV), 59-79 (WFVF…SFII), 103-123 (LAIE…FPLV), and 144-164 (VSMW…QIIG). Arg165 is an a 1,2-diacyl-sn-glycero-3-phospho-(1'-sn-glycerol) binding site. 2 helical membrane passes run 209-229 (PFFL…YIGG) and 265-285 (FATS…LLVC).

Belongs to the Lgt family.

It is found in the cell membrane. The catalysed reaction is L-cysteinyl-[prolipoprotein] + a 1,2-diacyl-sn-glycero-3-phospho-(1'-sn-glycerol) = an S-1,2-diacyl-sn-glyceryl-L-cysteinyl-[prolipoprotein] + sn-glycerol 1-phosphate + H(+). The protein operates within protein modification; lipoprotein biosynthesis (diacylglyceryl transfer). Functionally, catalyzes the transfer of the diacylglyceryl group from phosphatidylglycerol to the sulfhydryl group of the N-terminal cysteine of a prolipoprotein, the first step in the formation of mature lipoproteins. The protein is Phosphatidylglycerol--prolipoprotein diacylglyceryl transferase of Malacoplasma penetrans (strain HF-2) (Mycoplasma penetrans).